The chain runs to 267 residues: Sulfate transporter CysZ (267 aa).

Transmembrane regions (helical) follow at residues F29–I49, I73–L93, I149–V169, and G212–V232.

It belongs to the CysZ family.

Its subcellular location is the cell inner membrane. In terms of biological role, high affinity, high specificity proton-dependent sulfate transporter, which mediates sulfate uptake. Provides the sulfur source for the cysteine synthesis pathway. This chain is Sulfate transporter CysZ, found in Pasteurella multocida (strain Pm70).